The primary structure comprises 250 residues: 5'-nucleotidase SurE (250 aa).

Residues aspartate 8, aspartate 9, serine 39, and asparagine 91 each contribute to the a divalent metal cation site.

This sequence belongs to the SurE nucleotidase family. A divalent metal cation is required as a cofactor.

It is found in the cytoplasm. The enzyme catalyses a ribonucleoside 5'-phosphate + H2O = a ribonucleoside + phosphate. Its function is as follows. Nucleotidase that shows phosphatase activity on nucleoside 5'-monophosphates. The chain is 5'-nucleotidase SurE from Shewanella halifaxensis (strain HAW-EB4).